The sequence spans 302 residues: Glycine--tRNA ligase alpha subunit (302 aa).

The protein belongs to the class-II aminoacyl-tRNA synthetase family. In terms of assembly, tetramer of two alpha and two beta subunits.

It localises to the cytoplasm. The catalysed reaction is tRNA(Gly) + glycine + ATP = glycyl-tRNA(Gly) + AMP + diphosphate. This chain is Glycine--tRNA ligase alpha subunit, found in Psychromonas ingrahamii (strain DSM 17664 / CCUG 51855 / 37).